The following is a 415-amino-acid chain: uncharacterized protein (415 aa).

Residues Cys85, Cys91, Cys94, and Cys175 each coordinate [4Fe-4S] cluster. Positions 248, 276, 297, and 344 each coordinate S-adenosyl-L-methionine. Catalysis depends on Cys371, which acts as the Nucleophile.

The protein belongs to the class I-like SAM-binding methyltransferase superfamily. RNA M5U methyltransferase family.

This is an uncharacterized protein from Leptospira interrogans serogroup Icterohaemorrhagiae serovar Lai (strain 56601).